A 390-amino-acid polypeptide reads, in one-letter code: Levoglucosan dehydrogenase (390 aa).

Positions 13, 14, 43, 81, 83, 86, 103, 104, 130, and 132 each coordinate NADH. Levoglucosan is bound at residue lysine 104. Positions 133 and 163 each coordinate levoglucosan. Residues tryptophan 175 and arginine 176 each contribute to the NADH site. Residues arginine 176, aspartate 189, and histidine 193 each contribute to the levoglucosan site. Tyrosine 335 contacts NADH.

This sequence belongs to the Gfo/Idh/MocA family. As to quaternary structure, homotetramer.

The enzyme catalyses levoglucosan + NAD(+) = 3-dehydrolevoglucosan + NADH + H(+). In terms of biological role, catalyzes the oxidation of levoglucosan (1,6-anhydro-beta-D-glucose, LG) to 3-dehydrolevoglucosan (3-keto-LG). Exhibits high substrate specificity toward levoglucosan and NAD(+) for the oxidative reaction. Exhibits weak activities (about 4% compared with that of LG) toward L-sorbose and 1,5-anhydro-D-glucitol, and activity toward D-xylose is also detectable (1.7%). Can also efficiently catalyzes the NADH-dependent reduction (reverse reaction) of 3-keto-LG. This Pseudarthrobacter phenanthrenivorans (strain DSM 18606 / JCM 16027 / LMG 23796 / Sphe3) (Arthrobacter phenanthrenivorans) protein is Levoglucosan dehydrogenase.